The sequence spans 311 residues: MSTFWSGYIALLTLGTIVALFWLIFATRKGESAGTTDQTMGHAFDGIEEYDNPLPRWWFLLFIGTLVFGILYLVLYPGLGNWKGVLPGYEGGWTQEKQWEREVAQADEKYGPIFAKYAAMSVEEVAQDPQAVKMGARLFANYCSICHGSDAKGSLGFPNLADQDWRWGGDAASIKTSILNGRIAAMPAWGQAIGEEGVKNVAAFVRKDLAGLPLPEGTDADLSAGKNVYAQTCAVCHGQGGEGMAALGAPKLNSAAGWIYGSSLGQLQQTIRHGRNGQMPAQQQYLGDDKVHLLAAYVYSLSQKPEQLANQ.

A run of 2 helical transmembrane segments spans residues 4–24 (FWSG…FWLI) and 56–76 (RWWF…LVLY). Cytochrome c domains are found at residues 130-209 (QAVK…RKDL) and 220-302 (ADLS…YSLS). Heme c contacts are provided by cysteine 143, cysteine 146, histidine 147, methionine 186, cysteine 233, cysteine 236, histidine 237, and methionine 279.

Belongs to the CcoP / FixP family. Component of the cbb3-type cytochrome c oxidase at least composed of CcoN, CcoO, CcoQ and CcoP. Heme c serves as cofactor.

The protein resides in the cell inner membrane. It participates in energy metabolism; oxidative phosphorylation. Functionally, C-type cytochrome. Part of the cbb3-type cytochrome c oxidase complex. CcoP subunit is required for transferring electrons from donor cytochrome c via its heme groups to CcoO subunit. From there, electrons are shuttled to the catalytic binuclear center of CcoN subunit where oxygen reduction takes place. The complex also functions as a proton pump. The chain is Cbb3-type cytochrome c oxidase subunit CcoP1 from Stutzerimonas stutzeri (Pseudomonas stutzeri).